A 418-amino-acid chain; its full sequence is Putative competence-damage inducible protein (418 aa).

The protein belongs to the CinA family.

In Streptococcus pneumoniae serotype 2 (strain D39 / NCTC 7466), this protein is Putative competence-damage inducible protein.